Here is a 433-residue protein sequence, read N- to C-terminus: N-lysine methyltransferase SMYD2 (433 aa).

The 235-residue stretch at 7–241 folds into the SET domain; sequence GGLERFCSAG…PGDEVFTSYI (235 aa). 17 to 19 contributes to the S-adenosyl-L-methionine binding site; that stretch reads KGR. Zn(2+)-binding residues include C52, C55, C65, C68, C74, C78, H86, and C90. The MYND-type zinc finger occupies 52–90; it reads CECCFARKEGLSKCGRCKQAFYCDVECQKEDWPLHKLEC. Residues H137, 206-207, and 258-260 each bind S-adenosyl-L-methionine; these read NH and YFF. Position 283 is a phosphoserine (S283).

The protein belongs to the class V-like SAM-binding methyltransferase superfamily. Interacts with RNA polymerase II and HELZ. Interacts with SIN3A and HDAC1. Interacts (via MYND-type zinc finger) with EPB41L3. Interacts (via SET domain) with p53/TP53. Interacts with RB1 and HSP90AA1.

The protein resides in the cytoplasm. It localises to the cytosol. Its subcellular location is the nucleus. The enzyme catalyses L-lysyl(4)-[histone H3] + 3 S-adenosyl-L-methionine = N(6),N(6),N(6)-trimethyl-L-lysyl(4)-[histone H3] + 3 S-adenosyl-L-homocysteine + 3 H(+). It catalyses the reaction L-lysyl-[protein] + S-adenosyl-L-methionine = N(6)-methyl-L-lysyl-[protein] + S-adenosyl-L-homocysteine + H(+). Functionally, protein-lysine N-methyltransferase that methylates both histones and non-histone proteins, including p53/TP53 and RB1. Specifically trimethylates histone H3 'Lys-4' (H3K4me3) in vivo. The activity requires interaction with HSP90alpha. Shows even higher methyltransferase activity on p53/TP53. Monomethylates 'Lys-370' of p53/TP53, leading to decreased DNA-binding activity and subsequent transcriptional regulation activity of p53/TP53. Monomethylates RB1 at 'Lys-860'. The sequence is that of N-lysine methyltransferase SMYD2 (Smyd2) from Rattus norvegicus (Rat).